The sequence spans 130 residues: S-adenosylmethionine decarboxylase proenzyme (130 aa).

The active-site Schiff-base intermediate with substrate; via pyruvic acid is serine 63. Pyruvic acid (Ser); by autocatalysis is present on serine 63. Catalysis depends on histidine 68, which acts as the Proton acceptor; for processing activity. Residue cysteine 83 is the Proton donor; for catalytic activity of the active site.

It belongs to the prokaryotic AdoMetDC family. Type 1 subfamily. As to quaternary structure, heterotetramer of two alpha and two beta chains arranged as a dimer of alpha/beta heterodimers. It depends on pyruvate as a cofactor. Is synthesized initially as an inactive proenzyme. Formation of the active enzyme involves a self-maturation process in which the active site pyruvoyl group is generated from an internal serine residue via an autocatalytic post-translational modification. Two non-identical subunits are generated from the proenzyme in this reaction, and the pyruvate is formed at the N-terminus of the alpha chain, which is derived from the carboxyl end of the proenzyme. The post-translation cleavage follows an unusual pathway, termed non-hydrolytic serinolysis, in which the side chain hydroxyl group of the serine supplies its oxygen atom to form the C-terminus of the beta chain, while the remainder of the serine residue undergoes an oxidative deamination to produce ammonia and the pyruvoyl group blocking the N-terminus of the alpha chain.

It catalyses the reaction S-adenosyl-L-methionine + H(+) = S-adenosyl 3-(methylsulfanyl)propylamine + CO2. It functions in the pathway amine and polyamine biosynthesis; S-adenosylmethioninamine biosynthesis; S-adenosylmethioninamine from S-adenosyl-L-methionine: step 1/1. Catalyzes the decarboxylation of S-adenosylmethionine to S-adenosylmethioninamine (dcAdoMet), the propylamine donor required for the synthesis of the polyamines spermine and spermidine from the diamine putrescine. The chain is S-adenosylmethionine decarboxylase proenzyme from Thermotoga petrophila (strain ATCC BAA-488 / DSM 13995 / JCM 10881 / RKU-1).